A 633-amino-acid chain; its full sequence is Extracellular metalloproteinase 3 (633 aa).

The first 18 residues, 1-18 (MHGLLLAGLLALPMNVLA), serve as a signal peptide directing secretion. The propeptide occupies 19–246 (YPAEQHASNV…VHNVVDYVAS (228 aa)). N410 carries an N-linked (GlcNAc...) asparagine glycan. Zn(2+) is bound at residue H429. The active site involves E430. H433 contacts Zn(2+). N480 and N622 each carry an N-linked (GlcNAc...) asparagine glycan.

The protein belongs to the peptidase M36 family. Requires Zn(2+) as cofactor.

The protein resides in the secreted. Secreted metalloproteinase probably acting as a virulence factor. The sequence is that of Extracellular metalloproteinase 3 (MEP3) from Trichophyton rubrum (Athlete's foot fungus).